The following is a 298-amino-acid chain: HTH-type transcriptional regulator ArgP (298 aa).

Positions 4–60 (LDYKWIEALDAVVYQGSFERAAEHLFVSQSAISQRIKQLEKFLAQPVLIREQPPKPT) constitute an HTH lysR-type domain. A DNA-binding region (H-T-H motif) is located at residues 21-40 (FERAAEHLFVSQSAISQRIK).

Belongs to the LysR transcriptional regulatory family. In terms of assembly, homodimer.

In terms of biological role, controls the transcription of genes involved in arginine and lysine metabolism. The chain is HTH-type transcriptional regulator ArgP from Vibrio parahaemolyticus serotype O3:K6 (strain RIMD 2210633).